The chain runs to 476 residues: Proline--tRNA ligase (476 aa).

The protein belongs to the class-II aminoacyl-tRNA synthetase family. ProS type 3 subfamily. In terms of assembly, homodimer.

It localises to the cytoplasm. It catalyses the reaction tRNA(Pro) + L-proline + ATP = L-prolyl-tRNA(Pro) + AMP + diphosphate. In terms of biological role, catalyzes the attachment of proline to tRNA(Pro) in a two-step reaction: proline is first activated by ATP to form Pro-AMP and then transferred to the acceptor end of tRNA(Pro). This Mycoplasmopsis pulmonis (strain UAB CTIP) (Mycoplasma pulmonis) protein is Proline--tRNA ligase.